The primary structure comprises 647 residues: C2H2 finger domain transcription factor USV101 (647 aa).

A compositionally biased stretch (basic and acidic residues) spans Met1–Ala10. Positions Met1–Pro132 are disordered. 2 stretches are compositionally biased toward polar residues: residues Glu27–Gln54 and Ser66–Tyr84. The span at Pro97–Ser122 shows a compositional bias: low complexity. 2 consecutive C2H2-type zinc fingers follow at residues Phe144–His169 and Phe175–His197. The tract at residues Gln220–Gln647 is disordered. Residues Ala222 to Lys248 show a composition bias toward basic and acidic residues. Over residues Ala249–Ala259 the composition is skewed to low complexity. Positions Gly261 to Asn278 are enriched in polar residues. Composition is skewed to low complexity over residues Ser312–Ala327, His404–Ala414, and Gly421–Pro434. The span at Arg504–Lys515 shows a compositional bias: basic and acidic residues. The segment covering Ser521–His540 has biased composition (low complexity). Over residues Val628–Gln647 the composition is skewed to basic and acidic residues.

It is found in the nucleus. The protein resides in the cytoplasm. Its function is as follows. Transcription factor that promotes pheromone gene expression, which results in a subsequent increase in cell fusion. Also promotes production of melanin and capsule and thereby is required for full virulence. This chain is C2H2 finger domain transcription factor USV101, found in Cryptococcus neoformans var. grubii serotype A (strain H99 / ATCC 208821 / CBS 10515 / FGSC 9487) (Filobasidiella neoformans var. grubii).